Consider the following 292-residue polypeptide: Nitrogenase iron protein 1 (292 aa).

An ATP-binding site is contributed by 12–19 (GKGGIGKS). [4Fe-4S] cluster is bound at residue cysteine 101. Position 104 is an ADP-ribosylarginine; by dinitrogenase reductase ADP-ribosyltransferase (arginine 104). A [4Fe-4S] cluster-binding site is contributed by cysteine 135.

It belongs to the NifH/BchL/ChlL family. As to quaternary structure, homodimer. [4Fe-4S] cluster serves as cofactor. Post-translationally, the reversible ADP-ribosylation of Arg-104 inactivates the nitrogenase reductase and regulates nitrogenase activity.

It catalyses the reaction N2 + 8 reduced [2Fe-2S]-[ferredoxin] + 16 ATP + 16 H2O = H2 + 8 oxidized [2Fe-2S]-[ferredoxin] + 2 NH4(+) + 16 ADP + 16 phosphate + 6 H(+). The key enzymatic reactions in nitrogen fixation are catalyzed by the nitrogenase complex, which has 2 components: the iron protein and the molybdenum-iron protein. This Paenibacillus durus (Paenibacillus azotofixans) protein is Nitrogenase iron protein 1 (nifH1).